Here is a 447-residue protein sequence, read N- to C-terminus: Oxysterols receptor LXR-alpha (447 aa).

The tract at residues M1–P88 is disordered. Positions M1 to E96 are transactivation AF-1; required for ligand-independent transactivation function. The nuclear receptor DNA-binding region spans N95–S170. 2 consecutive NR C4-type zinc fingers follow at residues C98 to C118 and C134 to C158. The tract at residues K178–L203 is disordered. The segment covering A187–L203 has biased composition (low complexity). Positions Q205 to E447 are transactivation AF-2; required for ligand-dependent transactivation function; mediates interaction with CCAR2. An NR LBD domain is found at E209–E447.

Belongs to the nuclear hormone receptor family. NR1 subfamily. Heterodimer of NR1H3 and RXR (retinoic acid receptor). Interacts with CCAR2 (via N-terminus) in a ligand-independent manner. Interacts with SIRT1 and this interaction is inhibited by CCAR2. Post-translationally, ubiquitinated by UBR5, leading to its degradation: UBR5 specifically recognizes and binds ligand-bound NR1H3 when it is not associated with coactivators (NCOAs). In presence of NCOAs, the UBR5-degron is not accessible, preventing its ubiquitination and degradation.

Its subcellular location is the nucleus. It is found in the cytoplasm. Its function is as follows. Nuclear receptor that exhibits a ligand-dependent transcriptional activation activity. Interaction with retinoic acid receptor (RXR) shifts RXR from its role as a silent DNA-binding partner to an active ligand-binding subunit in mediating retinoid responses through target genes defined by LXRES. LXRES are DR4-type response elements characterized by direct repeats of two similar hexanuclotide half-sites spaced by four nucleotides. Plays an important role in the regulation of cholesterol homeostasis, regulating cholesterol uptake through MYLIP-dependent ubiquitination of LDLR, VLDLR and LRP8. Interplays functionally with RORA for the regulation of genes involved in liver metabolism. Induces LPCAT3-dependent phospholipid remodeling in endoplasmic reticulum (ER) membranes of hepatocytes, driving SREBF1 processing and lipogenesis. Via LPCAT3, triggers the incorporation of arachidonate into phosphatidylcholines of ER membranes, increasing membrane dynamics and enabling triacylglycerols transfer to nascent very low-density lipoprotein (VLDL) particles. Via LPCAT3 also counteracts lipid-induced ER stress response and inflammation, likely by modulating SRC kinase membrane compartmentalization and limiting the synthesis of lipid inflammatory mediators. The sequence is that of Oxysterols receptor LXR-alpha (NR1H3) from Bos taurus (Bovine).